Here is a 449-residue protein sequence, read N- to C-terminus: Ribulose bisphosphate carboxylase large chain (449 aa).

The propeptide occupies 1–2 (MS). Pro-3 carries the post-translational modification N-acetylproline. Lys-14 carries the post-translational modification N6,N6,N6-trimethyllysine. Substrate contacts are provided by Asn-123 and Thr-173. Lys-175 functions as the Proton acceptor in the catalytic mechanism. Lys-177 serves as a coordination point for substrate. Mg(2+) is bound by residues Lys-201, Asp-203, and Glu-204. Position 201 is an N6-carboxylysine (Lys-201). His-294 functions as the Proton acceptor in the catalytic mechanism. Xaa-295, His-327, and Ser-379 together coordinate substrate.

This sequence belongs to the RuBisCO large chain family. Type I subfamily. In terms of assembly, heterohexadecamer of 8 large chains and 8 small chains; disulfide-linked. The disulfide link is formed within the large subunit homodimers. Mg(2+) serves as cofactor. In terms of processing, the disulfide bond which can form in the large chain dimeric partners within the hexadecamer appears to be associated with oxidative stress and protein turnover.

The protein localises to the plastid. Its subcellular location is the chloroplast. It catalyses the reaction 2 (2R)-3-phosphoglycerate + 2 H(+) = D-ribulose 1,5-bisphosphate + CO2 + H2O. It carries out the reaction D-ribulose 1,5-bisphosphate + O2 = 2-phosphoglycolate + (2R)-3-phosphoglycerate + 2 H(+). In terms of biological role, ruBisCO catalyzes two reactions: the carboxylation of D-ribulose 1,5-bisphosphate, the primary event in carbon dioxide fixation, as well as the oxidative fragmentation of the pentose substrate in the photorespiration process. Both reactions occur simultaneously and in competition at the same active site. The protein is Ribulose bisphosphate carboxylase large chain of Salacia pallescens.